The chain runs to 753 residues: MAP/microtubule affinity-regulating kinase 3 (753 aa).

Residues 1 to 36 form a disordered region; sequence MSTRTPLPTVNERDTENHTSHGDGRQEVTSRTSRSG. Positions 11-28 are enriched in basic and acidic residues; the sequence is NERDTENHTSHGDGRQEV. S42 carries the phosphoserine modification. A Protein kinase domain is found at 56–307; sequence YRLLKTIGKG…LEQIMKDRWI (252 aa). Residues 62–70 and K85 contribute to the ATP site; that span reads IGKGNFAKV. Residue D178 is the Proton acceptor of the active site. T211 carries the post-translational modification Phosphothreonine; by LKB1. The UBA domain occupies 326–365; that stretch reads ISDQKRIDIMVGMGYSQEEIQESLSKMKYDEITATYLLLG. Residues S368, S374, S376, S380, S383, L384, S400, R407, S419, and S469 each carry the phosphoserine modification. The segment at 370–600 is disordered; that stretch reads ELDASDSSSS…TPLSQTRSRG (231 aa). Low complexity predominate over residues 374–385; that stretch reads SDSSSSSNLSLA. Over residues 391–400 the composition is skewed to polar residues; sequence SDLNNSTGQS. Composition is skewed to polar residues over residues 490-513 and 521-548; these read STVPSSNTASGGMTRRNTYVCSER and VIQNGKENSTIPDQRTPVASTHSISSAA. Residues S540 and S543 each carry the phosphoserine modification. T549 bears the Phosphothreonine mark. T564 is subject to Phosphothreonine; by PKC/PRKCZ. 4 positions are modified to phosphoserine: S583, S598, S601, and S643. The segment covering 584-600 has biased composition (polar residues); it reads PSLSHEATPLSQTRSRG. Residues 632 to 655 are disordered; it reads NGRYEGSSRNVSAEQKDENKEAKP. Over residues 645-655 the composition is skewed to basic and acidic residues; the sequence is EQKDENKEAKP. The KA1 domain maps to 704 to 753; sequence DGHAENLVQWEMEVCKLPRLSLNGVRFKRISGTSIAFKNIASKIANELKL.

The protein belongs to the protein kinase superfamily. CAMK Ser/Thr protein kinase family. SNF1 subfamily. Interacts with MAPT/TAU. Interacts with DLG5 (via coiled-coil domain). Interacts with STK3/MST2 and STK4/MST1 in the presence of DLG5. Interacts with YWHAB, YWHAG, YWHAQ and YWHAZ. Interacts with PKP2 (via N-terminus). Interacts with CDC25C. Interacts with KSR1. In terms of processing, phosphorylated at Thr-211 by STK11/LKB1 in complex with STE20-related adapter-alpha (STRADA) pseudo kinase and CAB39. Phosphorylation at Thr-564 by PRKCZ/aPKC inhibits the kinase activity. Ubiquitous.

Its subcellular location is the cell membrane. The protein localises to the cell projection. It localises to the dendrite. It is found in the cytoplasm. It carries out the reaction L-seryl-[protein] + ATP = O-phospho-L-seryl-[protein] + ADP + H(+). The catalysed reaction is L-threonyl-[protein] + ATP = O-phospho-L-threonyl-[protein] + ADP + H(+). With respect to regulation, activated by phosphorylation on Thr-211. Inhibited by phosphorylation on Thr-564. In terms of biological role, serine/threonine-protein kinase. Involved in the specific phosphorylation of microtubule-associated proteins for MAP2 and MAP4. Phosphorylates the microtubule-associated protein MAPT/TAU. Phosphorylates CDC25C on 'Ser-216'. Regulates localization and activity of some histone deacetylases by mediating phosphorylation of HDAC7, promoting subsequent interaction between HDAC7 and 14-3-3 and export from the nucleus. Regulates localization and activity of MITF by mediating its phosphorylation, promoting subsequent interaction between MITF and 14-3-3 and retention in the cytosol. Negatively regulates the Hippo signaling pathway and antagonizes the phosphorylation of LATS1. Cooperates with DLG5 to inhibit the kinase activity of STK3/MST2 toward LATS1. Phosphorylates PKP2 and KSR1. In Homo sapiens (Human), this protein is MAP/microtubule affinity-regulating kinase 3 (MARK3).